Consider the following 41-residue polypeptide: Large ribosomal subunit protein bL36 (41 aa).

It belongs to the bacterial ribosomal protein bL36 family.

In Phenylobacterium zucineum (strain HLK1), this protein is Large ribosomal subunit protein bL36.